The chain runs to 283 residues: Phosphatidylserine decarboxylase proenzyme (283 aa).

Residues Asp-90, His-143, and Ser-248 each act as charge relay system; for autoendoproteolytic cleavage activity in the active site. Ser-248 serves as the catalytic Schiff-base intermediate with substrate; via pyruvic acid; for decarboxylase activity. Ser-248 is subject to Pyruvic acid (Ser); by autocatalysis.

It belongs to the phosphatidylserine decarboxylase family. PSD-B subfamily. Prokaryotic type I sub-subfamily. In terms of assembly, heterodimer of a large membrane-associated beta subunit and a small pyruvoyl-containing alpha subunit. Requires pyruvate as cofactor. Post-translationally, is synthesized initially as an inactive proenzyme. Formation of the active enzyme involves a self-maturation process in which the active site pyruvoyl group is generated from an internal serine residue via an autocatalytic post-translational modification. Two non-identical subunits are generated from the proenzyme in this reaction, and the pyruvate is formed at the N-terminus of the alpha chain, which is derived from the carboxyl end of the proenzyme. The autoendoproteolytic cleavage occurs by a canonical serine protease mechanism, in which the side chain hydroxyl group of the serine supplies its oxygen atom to form the C-terminus of the beta chain, while the remainder of the serine residue undergoes an oxidative deamination to produce ammonia and the pyruvoyl prosthetic group on the alpha chain. During this reaction, the Ser that is part of the protease active site of the proenzyme becomes the pyruvoyl prosthetic group, which constitutes an essential element of the active site of the mature decarboxylase.

It localises to the cell membrane. It carries out the reaction a 1,2-diacyl-sn-glycero-3-phospho-L-serine + H(+) = a 1,2-diacyl-sn-glycero-3-phosphoethanolamine + CO2. It functions in the pathway phospholipid metabolism; phosphatidylethanolamine biosynthesis; phosphatidylethanolamine from CDP-diacylglycerol: step 2/2. Its function is as follows. Catalyzes the formation of phosphatidylethanolamine (PtdEtn) from phosphatidylserine (PtdSer). In Francisella tularensis subsp. mediasiatica (strain FSC147), this protein is Phosphatidylserine decarboxylase proenzyme.